The chain runs to 185 residues: ATP synthase subunit b, chloroplastic (185 aa).

A helical membrane pass occupies residues 7-29; sequence SFVYLVGHCPFAGSFAFNTDILA.

The protein belongs to the ATPase B chain family. As to quaternary structure, F-type ATPases have 2 components, F(1) - the catalytic core - and F(0) - the membrane proton channel. F(1) has five subunits: alpha(3), beta(3), gamma(1), delta(1), epsilon(1). F(0) has four main subunits: a(1), b(1), b'(1) and c(10-14). The alpha and beta chains form an alternating ring which encloses part of the gamma chain. F(1) is attached to F(0) by a central stalk formed by the gamma and epsilon chains, while a peripheral stalk is formed by the delta, b and b' chains.

It localises to the plastid. The protein localises to the chloroplast thylakoid membrane. In terms of biological role, f(1)F(0) ATP synthase produces ATP from ADP in the presence of a proton or sodium gradient. F-type ATPases consist of two structural domains, F(1) containing the extramembraneous catalytic core and F(0) containing the membrane proton channel, linked together by a central stalk and a peripheral stalk. During catalysis, ATP synthesis in the catalytic domain of F(1) is coupled via a rotary mechanism of the central stalk subunits to proton translocation. Its function is as follows. Component of the F(0) channel, it forms part of the peripheral stalk, linking F(1) to F(0). In Dioscorea elephantipes (Elephant's foot yam), this protein is ATP synthase subunit b, chloroplastic.